A 339-amino-acid polypeptide reads, in one-letter code: tRNA N6-adenosine threonylcarbamoyltransferase (339 aa).

The Fe cation site is built by His-111 and His-115. Substrate contacts are provided by residues 134–138, Asp-167, Gly-180, and Asn-274; that span reads LVSGG. A Fe cation-binding site is contributed by Asp-302.

This sequence belongs to the KAE1 / TsaD family. The cofactor is Fe(2+).

It localises to the cytoplasm. It carries out the reaction L-threonylcarbamoyladenylate + adenosine(37) in tRNA = N(6)-L-threonylcarbamoyladenosine(37) in tRNA + AMP + H(+). Its function is as follows. Required for the formation of a threonylcarbamoyl group on adenosine at position 37 (t(6)A37) in tRNAs that read codons beginning with adenine. Is involved in the transfer of the threonylcarbamoyl moiety of threonylcarbamoyl-AMP (TC-AMP) to the N6 group of A37, together with TsaE and TsaB. TsaD likely plays a direct catalytic role in this reaction. The polypeptide is tRNA N6-adenosine threonylcarbamoyltransferase (Methylobacillus flagellatus (strain ATCC 51484 / DSM 6875 / VKM B-1610 / KT)).